Consider the following 514-residue polypeptide: 2,3-bisphosphoglycerate-independent phosphoglycerate mutase (514 aa).

Mn(2+)-binding residues include aspartate 14 and serine 64. The active-site Phosphoserine intermediate is the serine 64. Residues histidine 125, 155–156 (RD), arginine 187, arginine 193, 263–266 (RADR), and lysine 336 contribute to the substrate site. Aspartate 403, histidine 407, aspartate 444, histidine 445, and histidine 463 together coordinate Mn(2+).

Belongs to the BPG-independent phosphoglycerate mutase family. In terms of assembly, monomer. Requires Mn(2+) as cofactor.

The enzyme catalyses (2R)-2-phosphoglycerate = (2R)-3-phosphoglycerate. Its pathway is carbohydrate degradation; glycolysis; pyruvate from D-glyceraldehyde 3-phosphate: step 3/5. Its function is as follows. Catalyzes the interconversion of 2-phosphoglycerate and 3-phosphoglycerate. The sequence is that of 2,3-bisphosphoglycerate-independent phosphoglycerate mutase from Escherichia coli (strain ATCC 8739 / DSM 1576 / NBRC 3972 / NCIMB 8545 / WDCM 00012 / Crooks).